Consider the following 888-residue polypeptide: Bifunctional uridylyltransferase/uridylyl-removing enzyme (888 aa).

The tract at residues 1–338 is uridylyltransferase; sequence MIITSPLLDY…LPNYERKIEE (338 aa). Positions 182–204 are disordered; it reads EQAKRHAQHNNTESNLEPDIKNA. The interval 339–699 is uridylyl-removing; the sequence is INENFKLVDG…AHRQSAQDAV (361 aa). One can recognise an HD domain in the interval 457 to 579; it reads VDAHTLLLIR…LGDMEHLDYL (123 aa). 2 consecutive ACT domains span residues 700-781 and 809-887; these read QIFI…GLMQ and MVEI…IVSQ.

This sequence belongs to the GlnD family. Requires Mg(2+) as cofactor.

It catalyses the reaction [protein-PII]-L-tyrosine + UTP = [protein-PII]-uridylyl-L-tyrosine + diphosphate. The enzyme catalyses [protein-PII]-uridylyl-L-tyrosine + H2O = [protein-PII]-L-tyrosine + UMP + H(+). With respect to regulation, uridylyltransferase (UTase) activity is inhibited by glutamine, while glutamine activates uridylyl-removing (UR) activity. In terms of biological role, modifies, by uridylylation and deuridylylation, the PII regulatory proteins (GlnB and homologs), in response to the nitrogen status of the cell that GlnD senses through the glutamine level. Under low glutamine levels, catalyzes the conversion of the PII proteins and UTP to PII-UMP and PPi, while under higher glutamine levels, GlnD hydrolyzes PII-UMP to PII and UMP (deuridylylation). Thus, controls uridylylation state and activity of the PII proteins, and plays an important role in the regulation of nitrogen assimilation and metabolism. This is Bifunctional uridylyltransferase/uridylyl-removing enzyme from Acinetobacter baylyi (strain ATCC 33305 / BD413 / ADP1).